A 493-amino-acid chain; its full sequence is Glutamyl-tRNA(Gln) amidotransferase subunit A (493 aa).

Active-site charge relay system residues include Lys-81 and Ser-156. The active-site Acyl-ester intermediate is the Ser-180.

The protein belongs to the amidase family. GatA subfamily. As to quaternary structure, heterotrimer of A, B and C subunits.

It carries out the reaction L-glutamyl-tRNA(Gln) + L-glutamine + ATP + H2O = L-glutaminyl-tRNA(Gln) + L-glutamate + ADP + phosphate + H(+). Functionally, allows the formation of correctly charged Gln-tRNA(Gln) through the transamidation of misacylated Glu-tRNA(Gln) in organisms which lack glutaminyl-tRNA synthetase. The reaction takes place in the presence of glutamine and ATP through an activated gamma-phospho-Glu-tRNA(Gln). This is Glutamyl-tRNA(Gln) amidotransferase subunit A from Mycobacterium ulcerans (strain Agy99).